Reading from the N-terminus, the 445-residue chain is Xylose isomerase (445 aa).

Active-site residues include H107 and D110. The Mg(2+) site is built by E238, E274, H277, D302, D313, D315, and D345.

It belongs to the xylose isomerase family. As to quaternary structure, homotetramer. The cofactor is Mg(2+).

It is found in the cytoplasm. It carries out the reaction alpha-D-xylose = alpha-D-xylulofuranose. This Bacillus spizizenii (strain ATCC 23059 / NRRL B-14472 / W23) (Bacillus subtilis subsp. spizizenii) protein is Xylose isomerase (xylA).